The primary structure comprises 479 residues: Ribosomal RNA small subunit methyltransferase F (479 aa).

S-adenosyl-L-methionine-binding positions include 125 to 131 (AAAPGSK), glutamate 149, aspartate 176, and aspartate 194. Residue cysteine 247 is the Nucleophile of the active site.

Belongs to the class I-like SAM-binding methyltransferase superfamily. RsmB/NOP family.

Its subcellular location is the cytoplasm. The enzyme catalyses cytidine(1407) in 16S rRNA + S-adenosyl-L-methionine = 5-methylcytidine(1407) in 16S rRNA + S-adenosyl-L-homocysteine + H(+). In terms of biological role, specifically methylates the cytosine at position 1407 (m5C1407) of 16S rRNA. The protein is Ribosomal RNA small subunit methyltransferase F of Salmonella typhi.